We begin with the raw amino-acid sequence, 280 residues long: MEPEDTQLKEDIKTTVNYIKQHGVEFENKLLEDERFSFIKKDDPLHEYYTKLMNEPTDTVSGEDNDRKSEREIARPPDFLFSQYDTGISRRDMEVIKLTARYYAKDKSIVEQMISKDGEARLNFMNSSHPLHKTFTDFVAQYKRVYSFTGQEIKKSKRTILDNCFERTQYWEFEKDKDREHDKLVELCKIQFAAIPWDKFTQVAKFSIPEDTEIFEGSLDLEQMRLRRVQTGIKLFDSIKPTNEEEKIVSDQGKQKGGDSKGKKRKIRAVGETRLKKSKK.

Residues 11–49 (DIKTTVNYIKQHGVEFENKLLEDERFSFIKKDDPLHEYY) form an SURP motif 1 repeat. The disordered stretch occupies residues 53–72 (MNEPTDTVSGEDNDRKSERE). The SURP motif 2 repeat unit spans residues 95 to 135 (VIKLTARYYAKDKSIVEQMISKDGEARLNFMNSSHPLHKTF). Basic and acidic residues-rich tracts occupy residues 246–261 (EKIVSDQGKQKGGDSK) and 269–280 (AVGETRLKKSKK). The disordered stretch occupies residues 246–280 (EKIVSDQGKQKGGDSKGKKRKIRAVGETRLKKSKK).

In terms of assembly, belongs to the CWC complex (or CEF1-associated complex), a spliceosome sub-complex reminiscent of a late-stage spliceosome composed of the U2, U5 and U6 snRNAs and at least BUD13, BUD31, BRR2, CDC40, CEF1, CLF1, CUS1, CWC2, CWC15, CWC21, CWC22, CWC23, CWC24, CWC25, CWC27, ECM2, HSH155, IST3, ISY1, LEA1, MSL1, NTC20, PRP8, PRP9, PRP11, PRP19, PRP21, PRP22, PRP45, PRP46, SLU7, SMB1, SMD1, SMD2, SMD3, SMX2, SMX3, SNT309, SNU114, SPP2, SYF1, SYF2, RSE1 and YJU2.

It localises to the nucleus. In terms of biological role, mRNA splicing factors, PRP9, PRP11, and PRP21, are necessary for binding of the U2 snRNP to the pre-mRNA in an early step of spliceosome assembly. The protein is Pre-mRNA-splicing factor PRP21 (PRP21) of Saccharomyces cerevisiae (strain ATCC 204508 / S288c) (Baker's yeast).